The following is a 446-amino-acid chain: Maltoporin (446 aa).

The signal sequence occupies residues 1–25 (MMITLRKLPLAVAVAAGVMSAQAMA).

Belongs to the porin LamB (TC 1.B.3) family. In terms of assembly, homotrimer formed of three 18-stranded antiparallel beta-barrels, containing three independent channels.

Its subcellular location is the cell outer membrane. It catalyses the reaction beta-maltose(in) = beta-maltose(out). In terms of biological role, involved in the transport of maltose and maltodextrins. The sequence is that of Maltoporin from Escherichia coli O157:H7 (strain EC4115 / EHEC).